The sequence spans 432 residues: Enolase (432 aa).

Glutamine 163 serves as a coordination point for (2R)-2-phosphoglycerate. Glutamate 205 (proton donor) is an active-site residue. The Mg(2+) site is built by aspartate 241, glutamate 289, and aspartate 316. (2R)-2-phosphoglycerate is bound by residues lysine 341, arginine 370, serine 371, and lysine 392. Catalysis depends on lysine 341, which acts as the Proton acceptor.

The protein belongs to the enolase family. It depends on Mg(2+) as a cofactor.

It localises to the cytoplasm. Its subcellular location is the secreted. It is found in the cell surface. It carries out the reaction (2R)-2-phosphoglycerate = phosphoenolpyruvate + H2O. The protein operates within carbohydrate degradation; glycolysis; pyruvate from D-glyceraldehyde 3-phosphate: step 4/5. Catalyzes the reversible conversion of 2-phosphoglycerate (2-PG) into phosphoenolpyruvate (PEP). It is essential for the degradation of carbohydrates via glycolysis. In Treponema pallidum (strain Nichols), this protein is Enolase.